The sequence spans 102 residues: NADH-quinone oxidoreductase subunit K 2 (102 aa).

3 helical membrane passes run 5–25, 30–50, and 65–85; these read FEHV…CVLV, LIML…AFVG, and LIIM…VVYL.

This sequence belongs to the complex I subunit 4L family. NDH-1 is composed of 14 different subunits. Subunits NuoA, H, J, K, L, M, N constitute the membrane sector of the complex.

It localises to the cell inner membrane. The catalysed reaction is a quinone + NADH + 5 H(+)(in) = a quinol + NAD(+) + 4 H(+)(out). In terms of biological role, NDH-1 shuttles electrons from NADH, via FMN and iron-sulfur (Fe-S) centers, to quinones in the respiratory chain. The immediate electron acceptor for the enzyme in this species is believed to be ubiquinone. Couples the redox reaction to proton translocation (for every two electrons transferred, four hydrogen ions are translocated across the cytoplasmic membrane), and thus conserves the redox energy in a proton gradient. The sequence is that of NADH-quinone oxidoreductase subunit K 2 from Geobacter sulfurreducens (strain ATCC 51573 / DSM 12127 / PCA).